Consider the following 61-residue polypeptide: Small ribosomal subunit protein uS14 (61 aa).

Residues cysteine 24, cysteine 27, cysteine 40, and cysteine 43 each contribute to the Zn(2+) site.

The protein belongs to the universal ribosomal protein uS14 family. Zinc-binding uS14 subfamily. As to quaternary structure, part of the 30S ribosomal subunit. Contacts proteins S3 and S10. Zn(2+) serves as cofactor.

Its function is as follows. Binds 16S rRNA, required for the assembly of 30S particles and may also be responsible for determining the conformation of the 16S rRNA at the A site. In Anaeromyxobacter sp. (strain Fw109-5), this protein is Small ribosomal subunit protein uS14.